Reading from the N-terminus, the 89-residue chain is Large ribosomal subunit protein bL27 (89 aa).

The segment at 1–20 (MAHKKAGGSSRNGRDSAGRR) is disordered.

The protein belongs to the bacterial ribosomal protein bL27 family.

This is Large ribosomal subunit protein bL27 from Rhizorhabdus wittichii (strain DSM 6014 / CCUG 31198 / JCM 15750 / NBRC 105917 / EY 4224 / RW1) (Sphingomonas wittichii).